A 371-amino-acid chain; its full sequence is DNA replication and repair protein RecF (371 aa).

ATP is bound at residue 30 to 37 (GENAQGKT).

This sequence belongs to the RecF family.

Its subcellular location is the cytoplasm. Functionally, the RecF protein is involved in DNA metabolism; it is required for DNA replication and normal SOS inducibility. RecF binds preferentially to single-stranded, linear DNA. It also seems to bind ATP. The sequence is that of DNA replication and repair protein RecF from Staphylococcus epidermidis (strain ATCC 35984 / DSM 28319 / BCRC 17069 / CCUG 31568 / BM 3577 / RP62A).